We begin with the raw amino-acid sequence, 1442 residues long: MVHNNDGDNNDQEMQEIGINEKRSQFPHISVEESRQEFDSFSNNIEGESKQFGMNRDAESNMAVESEEDFKLRKYFENSNRMHLENGGNEKKMGVSIRNLTVVGLGADASVIADMSTPFYGLVKLFTPSFWTKKTSTFDILHDVTTFCKDGEMVLVLGRPGAGCSTLLRVIANQTASYVSVKGDITYGGIPSKEFEKYRGEPIYTPEEDSHHPTLTVRETLDFALKCKTPGNRLPDETKRSFRDKVFNLLLSMFGIVHQADTIVGNEFIRGLSGGERKRLTITEAMVSSASITCWDCSTRGLDAASAFDYAKSIRIMSDTLHKTTIASFYQASDSIYNVFDKVCVLEKGRCIYFGPVGMAKQYFMSLGFDCEPRKSTPDFLTGVTNPQERIIKKGFEGRTPETSADFEEAWKNSDIYRDQLQEQKEYEELIERTQPKVAFVQEVRDANSKTNFKKSQYTTSFVTQVIALIKRNFALVLNDKFGMYSKYLSVLIQGFVYASLFYNMDTDITGLFTRGGAILSAVIFNAFLSIGEMAMTFYGRRVLQKHKSYALYRPSALHIAQVVTDIPFTAIQVFLFSIIAYFMFGLQYDAGKFFIFCFTLLGASLACTALFRCFGYLCPSMYIAQNISNVFIIFMLTYSGYTIPIPKMHPWFSWFRHINIFTYAFKALMANEFEGLDFNCKESAIPYGPAYQGSEFDAYRICPLGGIEQGSLYFKGDFYMDKTLSFATGEMSQNVIIVYCWWVFFVVCNMFAMEYIDHTSGGYTHKVYKKGKAPKMNDVEEEKQQNAIVAKATSNMKDTLHMDGGIFTWQNIRYTVKVPGGERLLLDNIEGWIKPGQMTALMGSSGAGKTTLLDVLAKRKTLGVVEGDSHLNGRELEIDFERITGYVEQMDVHNPGLTVREALRFSAKLRQEPEVSLEEKFKYVEHVLEMMEMKHLGDALIGTLETGVGISVEERKRLTIGVELVAKPQILFLDEPTSGLDAQSSYNIIKFIRKLADAGMPLVCTIHQPSSVLFEHFDRILLLAKGGKTVYFGDIGEKSKTLTSYFERHGVRPCTESENPAEYILEATGAGVHGKSDVNWPEAWKQSPELADISRELAALKEQGAQQYKPRSDGPAREFSQSTWYQTKEVYKRLNLIWWRDPYYTYGSFVQAALCGLIIGFTFWNLQGSSSDMNQRIFFIFEALMLGILLIFVVMPQLIIQREYFKRDFASKFYSWFPFAISIVVVELPFIVISGTIFFFCSFWTAGLHKTSDDEQTFYFWFIFIIFMFFCVSFGQAVAAVCINMFFAMTLIPLLIVFLFLFCGVMVPPSSIPTFWRGWVYHLNPCRYFMEGIITNILKTVRVECSEEDMAIFTFPKSYNTCQNYTSAFQSYKPSGYVESATLNGEPACGYCIYKNGEEYYETLGWSADNRWRNVGIIIGFFVFNILMVILFVYLTRKGSR.

The ABC transporter 1 domain occupies 125–373 (LFTPSFWTKK…FMSLGFDCEP (249 aa)). One can recognise an ABC transmembrane type-2 1 domain in the interval 478 to 718 (LNDKFGMYSK…EQGSLYFKGD (241 aa)). The next 6 membrane-spanning stretches (helical) occupy residues 482–502 (FGMYSKYLSVLIQGFVYASLF), 518–538 (AILSAVIFNAFLSIGEMAMTF), 567–587 (IPFTAIQVFLFSIIAYFMFGL), 592–612 (GKFFIFCFTLLGASLACTALF), 627–647 (NISNVFIIFMLTYSGYTIPIP), and 737–757 (IIVYCWWVFFVVCNMFAMEYI). In terms of domain architecture, ABC transporter 2 spans 808 to 1052 (FTWQNIRYTV…LTSYFERHGV (245 aa)). Position 844-851 (844-851 (GSSGAGKT)) interacts with ATP. An ABC transmembrane type-2 2 domain is found at 1144–1369 (YYTYGSFVQA…YNTCQNYTSA (226 aa)). Transmembrane regions (helical) follow at residues 1147–1167 (YGSFVQAALCGLIIGFTFWNL), 1181–1201 (IFEALMLGILLIFVVMPQLII), 1220–1240 (FAISIVVVELPFIVISGTIFF), 1259–1279 (FYFWFIFIIFMFFCVSFGQAV), 1286–1306 (MFFAMTLIPLLIVFLFLFCGV), and 1416–1436 (VGIIIGFFVFNILMVILFVYL).

It belongs to the ABC transporter superfamily. ABCG family. PDR (TC 3.A.1.205) subfamily.

Its subcellular location is the membrane. The polypeptide is ABC transporter G family member 11 (abcG11) (Dictyostelium discoideum (Social amoeba)).